Reading from the N-terminus, the 256-residue chain is tRNA (guanine-N(7)-)-methyltransferase (256 aa).

The span at 1 to 15 shows a compositional bias: polar residues; that stretch reads MVATGGQAQDQSHNQ. The interval 1–22 is disordered; sequence MVATGGQAQDQSHNQEPGVLCP. Residues G79, 102 to 103, 137 to 138, and L157 contribute to the S-adenosyl-L-methionine site; these read EI and NA. D160 is a catalytic residue. Residue 235 to 237 participates in S-adenosyl-L-methionine binding; it reads SEE.

The protein belongs to the class I-like SAM-binding methyltransferase superfamily. TrmB family.

Its subcellular location is the nucleus. The enzyme catalyses guanosine(46) in tRNA + S-adenosyl-L-methionine = N(7)-methylguanosine(46) in tRNA + S-adenosyl-L-homocysteine. It participates in tRNA modification; N(7)-methylguanine-tRNA biosynthesis. Its function is as follows. Catalyzes the formation of N(7)-methylguanine at position 46 (m7G46) in tRNA. The protein is tRNA (guanine-N(7)-)-methyltransferase of Drosophila yakuba (Fruit fly).